The chain runs to 168 residues: 2-C-methyl-D-erythritol 2,4-cyclodiphosphate synthase (168 aa).

A divalent metal cation-binding residues include aspartate 13 and histidine 15. 4-CDP-2-C-methyl-D-erythritol 2-phosphate-binding positions include 13–15 (DVH) and 39–40 (HS). Histidine 47 is an a divalent metal cation binding site. Residues 61–63 (DIG), 66–70 (FPDTD), phenylalanine 144, and lysine 147 contribute to the 4-CDP-2-C-methyl-D-erythritol 2-phosphate site.

It belongs to the IspF family. Homotrimer. A divalent metal cation serves as cofactor.

It carries out the reaction 4-CDP-2-C-methyl-D-erythritol 2-phosphate = 2-C-methyl-D-erythritol 2,4-cyclic diphosphate + CMP. Its pathway is isoprenoid biosynthesis; isopentenyl diphosphate biosynthesis via DXP pathway; isopentenyl diphosphate from 1-deoxy-D-xylulose 5-phosphate: step 4/6. In terms of biological role, involved in the biosynthesis of isopentenyl diphosphate (IPP) and dimethylallyl diphosphate (DMAPP), two major building blocks of isoprenoid compounds. Catalyzes the conversion of 4-diphosphocytidyl-2-C-methyl-D-erythritol 2-phosphate (CDP-ME2P) to 2-C-methyl-D-erythritol 2,4-cyclodiphosphate (ME-CPP) with a corresponding release of cytidine 5-monophosphate (CMP). The polypeptide is 2-C-methyl-D-erythritol 2,4-cyclodiphosphate synthase (Cupriavidus metallidurans (strain ATCC 43123 / DSM 2839 / NBRC 102507 / CH34) (Ralstonia metallidurans)).